Reading from the N-terminus, the 120-residue chain is uncharacterized protein (120 aa).

Positions 1–27 are cleaved as a signal peptide; that stretch reads MPKIGVSLIVLIMLIIFLAGCNKNEQN.

This is an uncharacterized protein from Bacillus subtilis (strain 168).